We begin with the raw amino-acid sequence, 610 residues long: UvrABC system protein C (610 aa).

The GIY-YIG domain maps to 16-94 (HQPGVYRMYN…IKQYLPKYNV (79 aa)). One can recognise a UVR domain in the interval 204 to 239 (NQVLELLVQKMEIASQQLKFEDAAKFRDQIQAIRRV).

This sequence belongs to the UvrC family. Interacts with UvrB in an incision complex.

It localises to the cytoplasm. In terms of biological role, the UvrABC repair system catalyzes the recognition and processing of DNA lesions. UvrC both incises the 5' and 3' sides of the lesion. The N-terminal half is responsible for the 3' incision and the C-terminal half is responsible for the 5' incision. This is UvrABC system protein C from Vibrio vulnificus (strain CMCP6).